A 436-amino-acid chain; its full sequence is Trigger factor (436 aa).

Positions 163–248 (DDRIVLDFAG…VKEVAEAVLP (86 aa)) constitute a PPIase FKBP-type domain.

It belongs to the FKBP-type PPIase family. Tig subfamily.

The protein localises to the cytoplasm. The catalysed reaction is [protein]-peptidylproline (omega=180) = [protein]-peptidylproline (omega=0). Involved in protein export. Acts as a chaperone by maintaining the newly synthesized protein in an open conformation. Functions as a peptidyl-prolyl cis-trans isomerase. The polypeptide is Trigger factor (Bordetella avium (strain 197N)).